We begin with the raw amino-acid sequence, 151 residues long: Small ribosomal subunit protein uS13m (151 aa).

It belongs to the universal ribosomal protein uS13 family. Component of the mitochondrial small ribosomal subunit (mt-SSU). Mature yeast 74S mitochondrial ribosomes consist of a small (37S) and a large (54S) subunit. The 37S small subunit contains a 15S ribosomal RNA (15S mt-rRNA) and at least 32 different proteins. The 54S large subunit contains a 21S rRNA (21S mt-rRNA) and at least 45 different proteins.

The protein resides in the mitochondrion. Component of the mitochondrial ribosome (mitoribosome), a dedicated translation machinery responsible for the synthesis of mitochondrial genome-encoded proteins, including at least some of the essential transmembrane subunits of the mitochondrial respiratory chain. The mitoribosomes are attached to the mitochondrial inner membrane and translation products are cotranslationally integrated into the membrane. This chain is Small ribosomal subunit protein uS13m (sws2), found in Schizosaccharomyces pombe (strain 972 / ATCC 24843) (Fission yeast).